The chain runs to 437 residues: Aminopeptidase W (437 aa).

Catalysis depends on residues Cys-70, His-361, and Asn-382.

This sequence belongs to the peptidase C1 family.

Its subcellular location is the cytoplasm. This is Aminopeptidase W (pepW) from Lactobacillus delbrueckii subsp. lactis.